Consider the following 179-residue polypeptide: Interleukin-22 (179 aa).

A signal peptide spans 1-33 (MAALQKSVSSFLMGTLATSCLLLLALLVQGGAA). 2 cysteine pairs are disulfide-bonded: Cys40/Cys132 and Cys89/Cys178. N-linked (GlcNAc...) asparagine glycosylation is found at Asn54, Asn68, and Asn97.

It belongs to the IL-10 family.

Its subcellular location is the secreted. Functionally, cytokine that plays a critical role in modulating tissue responses during inflammation. Plays an essential role in the regeneration of epithelial cells to maintain barrier function after injury and for the prevention of further tissue damage. Unlike most of the cytokines, has no effect on immune cells. Signals through a heterodimeric receptor composed of two subunits, the specific receptor IL22RA1 which is present on non-immune cells in many organs and the shared subunit IL10RB. Ligation of IL22RA1 with IL22 induces activation of the tyrosine kinases JAK1 and TYK2, which in turn activates STAT3. In turn, promotes cell survival and proliferation through STAT3, ERK1/2 and PI3K/AKT pathways. Promotes phosphorylation of GSK3B at 'Ser-9' and CTTN. Promotes epithelial cell spreading. This chain is Interleukin-22 (IL22), found in Homo sapiens (Human).